We begin with the raw amino-acid sequence, 147 residues long: Large ribosomal subunit protein bL9 (147 aa).

This sequence belongs to the bacterial ribosomal protein bL9 family.

Functionally, binds to the 23S rRNA. In Geotalea uraniireducens (strain Rf4) (Geobacter uraniireducens), this protein is Large ribosomal subunit protein bL9.